Reading from the N-terminus, the 382-residue chain is Apolipoprotein A-IV (382 aa).

An N-terminal signal peptide occupies residues 1-20; it reads MFLRAVVLTLALVAVTGARA. A run of 13 repeats spans residues 33–54, 60–81, 82–103, 115–136, 137–158, 159–180, 181–202, 203–224, 225–246, 247–268, 269–286, 287–308, and 309–330. Residues 33–330 form a 13 X 22 AA approximate tandem repeats region; sequence DYFSQLSNNA…QVEELRQKLG (298 aa). The interval 362-382 is disordered; that stretch reads ENQDMPLALPEQEQAPGPLES.

It belongs to the apolipoprotein A1/A4/E family. Homodimer.

It localises to the secreted. May have a role in chylomicrons and VLDL secretion and catabolism. Required for efficient activation of lipoprotein lipase by ApoC-II; potent activator of LCAT. Apoa-IV is a major component of HDL and chylomicrons. The sequence is that of Apolipoprotein A-IV (APOA4) from Acinonyx jubatus (Cheetah).